Here is a 471-residue protein sequence, read N- to C-terminus: E3 ubiquitin-protein ligase TRIM38 (471 aa).

Residues 16–62 form an RING-type zinc finger; that stretch reads CSICKAMMSHPVSINCGHSYCKSCIQSYYCNVSPKTGWKMLGCPLCS. The segment at 90–131 adopts a B box-type zinc-finger fold; sequence DQDMVCEEHEEKFNRFCEDDGQLLCWRCYWEDRHKGHTLAHV. Zn(2+)-binding residues include Cys-95, His-98, Cys-117, and His-123. A B30.2/SPRY domain is found at 276–471; the sequence is CNVSELYFDV…PLFLPAINNQ (196 aa).

Interacts (via B30.2/SPRY domain) with TAB2 and TAB3.

The protein resides in the cytoplasm. The enzyme catalyses S-ubiquitinyl-[E2 ubiquitin-conjugating enzyme]-L-cysteine + [acceptor protein]-L-lysine = [E2 ubiquitin-conjugating enzyme]-L-cysteine + N(6)-ubiquitinyl-[acceptor protein]-L-lysine.. The protein operates within protein modification; protein ubiquitination. Its pathway is protein modification; protein sumoylation. E3 ubiquitin-protein and E3 SUMO-protein ligase that acts as a regulator of innate immunity. Acts as a negative regulator of type I interferon IFN-beta production by catalyzing 'Lys-48'-linked polyubiquitination of AZI2/NAP1, leading to its degradation. Mediates 'Lys-48'-linked polyubiquitination and proteasomal degradation of the critical TLR adapter TICAM1, inhibiting TLR3-mediated type I interferon signaling. Acts as a positive regulator of the cGAS-STING pathway by acting as a E3 SUMO-protein ligase: mediates sumoylation of CGAS and STING, preventing their degradation and thereby activating the innate immune response to DNA virus. Also acts as a negative regulator of NF-kappa-B signaling independently of its E3 protein ligase activity by promoting lysosome-dependent degradation of TAB2 and TAB3 adapters. The sequence is that of E3 ubiquitin-protein ligase TRIM38 from Mus musculus (Mouse).